A 206-amino-acid polypeptide reads, in one-letter code: Large ribosomal subunit protein uL4 (206 aa).

Residues 42-94 form a disordered region; sequence RRQQGSHKAQGRGDVSRTGSKMYKQKGTGRARHHSARAPQFRGGGQAHGPVVR. Positions 64–77 are enriched in basic residues; sequence YKQKGTGRARHHSA.

It belongs to the universal ribosomal protein uL4 family. As to quaternary structure, part of the 50S ribosomal subunit.

In terms of biological role, one of the primary rRNA binding proteins, this protein initially binds near the 5'-end of the 23S rRNA. It is important during the early stages of 50S assembly. It makes multiple contacts with different domains of the 23S rRNA in the assembled 50S subunit and ribosome. Its function is as follows. Forms part of the polypeptide exit tunnel. The protein is Large ribosomal subunit protein uL4 of Brucella abortus biovar 1 (strain 9-941).